We begin with the raw amino-acid sequence, 421 residues long: UDP-N-acetylglucosamine 1-carboxyvinyltransferase (421 aa).

Phosphoenolpyruvate is bound at residue lysine 22 to asparagine 23. Arginine 92 is a binding site for UDP-N-acetyl-alpha-D-glucosamine. Cysteine 116 acts as the Proton donor in catalysis. Position 116 is a 2-(S-cysteinyl)pyruvic acid O-phosphothioketal (cysteine 116). Residues arginine 121–glutamine 125, aspartate 304, and isoleucine 326 contribute to the UDP-N-acetyl-alpha-D-glucosamine site.

It belongs to the EPSP synthase family. MurA subfamily.

The protein localises to the cytoplasm. The enzyme catalyses phosphoenolpyruvate + UDP-N-acetyl-alpha-D-glucosamine = UDP-N-acetyl-3-O-(1-carboxyvinyl)-alpha-D-glucosamine + phosphate. Its pathway is cell wall biogenesis; peptidoglycan biosynthesis. Functionally, cell wall formation. Adds enolpyruvyl to UDP-N-acetylglucosamine. This chain is UDP-N-acetylglucosamine 1-carboxyvinyltransferase, found in Bordetella avium (strain 197N).